The chain runs to 151 residues: Myosin light polypeptide 6 (151 aa).

N-acetylcysteine is present on cysteine 2. The EF-hand 1 domain occupies 7–42 (DQTAEFKEAFQLFDRTGDGKILYSQCGDVMRALGQN). Phosphoserine is present on serine 57. Lysine 81 is modified (N6-acetyllysine). The region spanning 84–119 (GTYEDYVEGLRVFDKEGNGTVMGAEIRHVLVTLGEK) is the EF-hand 2 domain.

In terms of assembly, myosin is a hexamer of 2 heavy chains and 4 light chains. Interacts with SPATA6.

Functionally, regulatory light chain of myosin. Does not bind calcium. In Bos taurus (Bovine), this protein is Myosin light polypeptide 6 (MYL6).